We begin with the raw amino-acid sequence, 243 residues long: I/6 autoantigen (243 aa).

The EF-hand domain occupies L110 to R145. A disordered region spans residues P166–C243. A compositionally biased stretch (basic residues) spans P176 to Q196. 6 consecutive repeat copies span residues R181–Q188, G189–Q196, R197–Q204, R205–Q212, R213–Q220, and K221–G228. Residues R181–G228 form a 6 X 8 AA tandem repeats region. Residues Q198–Q220 show a composition bias toward basic and acidic residues.

It is found in the cytoplasm. It localises to the cytoskeleton. Its function is as follows. Microtubule-associated protein that may be involved in cross-linking microtubules. This Trypanosoma brucei brucei protein is I/6 autoantigen.